The following is a 467-amino-acid chain: MPTMRNSIFSEKVYPILLSAYRWYLRTPERSLEEAYKAALNIKAIEDEHFNGNKIDFNSAIYSNSVMDYFESDLAQELKTARMRLTEFRFSRWFSNESHQKAARKAGIEYPSSTVILEKLKFIDEIISKYIITDYEIAAPSGASDLQVRTTSLQPPENPSLTDSLRNNDINKNNLVERIYTPTSPPQLIRPRTEQNKKPRGKADTTGILPRSILSTIGRLQIELDPNSEQDVINNFRQAQKRSIISIRFILLLIIVPLLTHQLSKALIVSPIFNHFKKADTEQIFLNSEMEEEALSTLHRFEERIKFENLISNAPPLSAEAIETQIKEKAEEIAAEFRGESANAIKNVFADIFSVGAFIWLLLVSKPSIMVLKEFFDNVVYGLSDSAKAFIIILFTDVFVGFHSPHGWEVILEGLSRHWGLPANRDFIFLFIATFPVILDTIFKYWIFRYLNRISPSAVATYRNMNE.

The segment at 183–205 (TSPPQLIRPRTEQNKKPRGKADT) is disordered. Residues 191 to 203 (PRTEQNKKPRGKA) show a composition bias toward basic and acidic residues. 4 helical membrane passes run 249 to 269 (FILLLIIVPLLTHQLSKALIV), 352 to 372 (IFSVGAFIWLLLVSKPSIMVL), 391 to 411 (IIILFTDVFVGFHSPHGWEVI), and 427 to 447 (FIFLFIATFPVILDTIFKYWI).

Belongs to the CemA family.

Its subcellular location is the cell inner membrane. Required for H(+) efflux immediately after light irradiation to form a rapid H(+) concentration gradient across the thylakoid membranes. Together with PxcL, contributes to transient H(+) uptake following dark to light transition. The chain is Proton extrusion protein PxcA from Trichormus variabilis (strain ATCC 29413 / PCC 7937) (Anabaena variabilis).